Consider the following 506-residue polypeptide: NAD(P)H-quinone oxidoreductase subunit 2 (506 aa).

13 helical membrane-spanning segments follow: residues 14–34 (AIIP…VDLA), 42–62 (WAPI…ALQW), 79–99 (LAIA…LISW), 108–128 (PIGE…LLCG), 132–152 (LISI…LSGY), 167–187 (LLVG…LYGL), 206–226 (FITS…IAAV), 240–260 (PTPV…AFAI), 276–296 (LLFT…ALAQ), 302–322 (MLAY…VSGT), 330–350 (VLYL…VILF), 374–394 (LGLS…GFFG), and 409–429 (LLVI…ISVI).

It belongs to the complex I subunit 2 family. NDH-1 can be composed of about 15 different subunits; different subcomplexes with different compositions have been identified which probably have different functions.

It is found in the cellular thylakoid membrane. It carries out the reaction a plastoquinone + NADH + (n+1) H(+)(in) = a plastoquinol + NAD(+) + n H(+)(out). The enzyme catalyses a plastoquinone + NADPH + (n+1) H(+)(in) = a plastoquinol + NADP(+) + n H(+)(out). In terms of biological role, NDH-1 shuttles electrons from an unknown electron donor, via FMN and iron-sulfur (Fe-S) centers, to quinones in the respiratory and/or the photosynthetic chain. The immediate electron acceptor for the enzyme in this species is believed to be plastoquinone. Couples the redox reaction to proton translocation, and thus conserves the redox energy in a proton gradient. Cyanobacterial NDH-1 also plays a role in inorganic carbon-concentration. The polypeptide is NAD(P)H-quinone oxidoreductase subunit 2 (Prochlorococcus marinus (strain MIT 9312)).